The chain runs to 225 residues: Phosphatidylserine decarboxylase proenzyme (225 aa).

Serine 195 (schiff-base intermediate with substrate; via pyruvic acid) is an active-site residue. Residue serine 195 is modified to Pyruvic acid (Ser); by autocatalysis.

The protein belongs to the phosphatidylserine decarboxylase family. PSD-A subfamily. In terms of assembly, heterodimer of a large membrane-associated beta subunit and a small pyruvoyl-containing alpha subunit. It depends on pyruvate as a cofactor. Post-translationally, is synthesized initially as an inactive proenzyme. Formation of the active enzyme involves a self-maturation process in which the active site pyruvoyl group is generated from an internal serine residue via an autocatalytic post-translational modification. Two non-identical subunits are generated from the proenzyme in this reaction, and the pyruvate is formed at the N-terminus of the alpha chain, which is derived from the carboxyl end of the proenzyme. The post-translation cleavage follows an unusual pathway, termed non-hydrolytic serinolysis, in which the side chain hydroxyl group of the serine supplies its oxygen atom to form the C-terminus of the beta chain, while the remainder of the serine residue undergoes an oxidative deamination to produce ammonia and the pyruvoyl prosthetic group on the alpha chain.

The protein localises to the cell membrane. The catalysed reaction is a 1,2-diacyl-sn-glycero-3-phospho-L-serine + H(+) = a 1,2-diacyl-sn-glycero-3-phosphoethanolamine + CO2. It functions in the pathway phospholipid metabolism; phosphatidylethanolamine biosynthesis; phosphatidylethanolamine from CDP-diacylglycerol: step 2/2. In terms of biological role, catalyzes the formation of phosphatidylethanolamine (PtdEtn) from phosphatidylserine (PtdSer). This chain is Phosphatidylserine decarboxylase proenzyme, found in Gluconacetobacter diazotrophicus (strain ATCC 49037 / DSM 5601 / CCUG 37298 / CIP 103539 / LMG 7603 / PAl5).